The primary structure comprises 513 residues: ATP synthase subunit alpha (513 aa).

Residue 172–179 (GDRQTGKT) coordinates ATP.

Belongs to the ATPase alpha/beta chains family. F-type ATPases have 2 components, CF(1) - the catalytic core - and CF(0) - the membrane proton channel. CF(1) has five subunits: alpha(3), beta(3), gamma(1), delta(1), epsilon(1). CF(0) has three main subunits: a(1), b(2) and c(9-12). The alpha and beta chains form an alternating ring which encloses part of the gamma chain. CF(1) is attached to CF(0) by a central stalk formed by the gamma and epsilon chains, while a peripheral stalk is formed by the delta and b chains.

The protein resides in the cell inner membrane. The catalysed reaction is ATP + H2O + 4 H(+)(in) = ADP + phosphate + 5 H(+)(out). Functionally, produces ATP from ADP in the presence of a proton gradient across the membrane. The alpha chain is a regulatory subunit. The polypeptide is ATP synthase subunit alpha (Gluconacetobacter diazotrophicus (strain ATCC 49037 / DSM 5601 / CCUG 37298 / CIP 103539 / LMG 7603 / PAl5)).